The primary structure comprises 132 residues: Small ribosomal subunit protein uS8 (132 aa).

This sequence belongs to the universal ribosomal protein uS8 family. In terms of assembly, part of the 30S ribosomal subunit. Contacts proteins S5 and S12.

Functionally, one of the primary rRNA binding proteins, it binds directly to 16S rRNA central domain where it helps coordinate assembly of the platform of the 30S subunit. The protein is Small ribosomal subunit protein uS8 of Rickettsia conorii (strain ATCC VR-613 / Malish 7).